The chain runs to 555 residues: Transcription factor kojR (555 aa).

Residues 21–47 (CETCKLRKRKCDGHEPCTYCLRYEYQC) constitute a DNA-binding region (zn(2)-C6 fungal-type). A disordered region spans residues 51 to 73 (PHPRRKPAASKSSARPSEEEDSP).

It is found in the nucleus. In terms of biological role, transcription factor that regulates the gene cluster that mediates the biosynthesis of 5-hydroxy-2-hydroxymethyl-1,4-pyrone, also know as kojic acid, a by-product in the fermentation process of malting rice that acts as a chelation agent. Negatively regulates the expression of the kojic acid-related protein kap1. Improves the antioxidant capacity via the accumulation of kojic acid that is also a strong oxidant. In Aspergillus oryzae (strain ATCC 42149 / RIB 40) (Yellow koji mold), this protein is Transcription factor kojR.